Here is a 641-residue protein sequence, read N- to C-terminus: FAD-binding monooxygenase ausB (641 aa).

Residues 1 to 68 form a disordered region; sequence MAIGPKPESI…DSTTNVPYSL (68 aa). Over residues 49–68 the composition is skewed to polar residues; that stretch reads WLTSTDQPQPDSTTNVPYSL. Residues 115–118, 127–128, and Y133 contribute to the FAD site; these read TWYW and DI. An NADP(+)-binding site is contributed by 125–127; that stretch reads MCD. Residues 272–278 and 295–296 contribute to the NADP(+) site; these read TGSTAVQ and RT.

It belongs to the FAD-binding monooxygenase family. FAD is required as a cofactor.

It catalyses the reaction protoaustinoid A + AH2 + O2 = berkeleyone A + A + H2O. The protein operates within secondary metabolite biosynthesis; terpenoid biosynthesis. Functionally, FAD-binding monooxygenase; part of the gene cluster A that mediates the biosynthesis of the fungal meroterpenoid acetoxydehydroaustin. The first step of the pathway is the synthesis of 3,5-dimethylorsellinic acid by the polyketide synthase ausA. 3,5-dimethylorsellinic acid is then prenylated by the polyprenyl transferase ausN. Further epoxidation by the FAD-dependent monooxygenase ausM and cyclization by the probable terpene cyclase ausL lead to the formation of protoaustinoid A. Protoaustinoid A is then oxidized to spiro-lactone preaustinoid A3 by the combined action of the FAD-binding monooxygenases ausB and ausC, and the dioxygenase ausE. Acid-catalyzed keto-rearrangement and ring contraction of the tetraketide portion of preaustinoid A3 by ausJ lead to the formation of preaustinoid A4. The aldo-keto reductase ausK, with the help of ausH, is involved in the next step by transforming preaustinoid A4 into isoaustinone which is in turn hydroxylated by the P450 monooxygenase ausI to form austinolide. The cytochrome P450 monooxygenase ausG then modifies austinolide to austinol. Austinol is further acetylated to austin by the O-acetyltransferase ausP, which spontaneously changes to dehydroaustin. The cytochrome P450 monooxygenase then converts dehydroaustin is into 7-dehydrodehydroaustin. The hydroxylation catalyzed by ausR permits the second O-acetyltransferase ausQ to add an additional acetyl group to the molecule, leading to the formation of acetoxydehydroaustin. Due to genetic rearrangements of the clusters and the subsequent loss of some enzymes, the end product of the Penicillium brasilianum austinoid biosynthesis clusters is acetoxydehydroaustin. In Penicillium brasilianum, this protein is FAD-binding monooxygenase ausB.